Reading from the N-terminus, the 78-residue chain is Large ribosomal subunit protein bL31 (78 aa).

The protein belongs to the bacterial ribosomal protein bL31 family. Type A subfamily. Part of the 50S ribosomal subunit.

Binds the 23S rRNA. The chain is Large ribosomal subunit protein bL31 from Rickettsia prowazekii (strain Madrid E).